A 129-amino-acid chain; its full sequence is Thylakoid-associated single-stranded DNA-binding protein slr1034 (129 aa).

Positions 1-100 constitute an SSB domain; that stretch reads MNSFVLMATV…LTASRISLVD (100 aa). Residues 99 to 129 are disordered; sequence VDSGNGINPGELSSPPEPEAVDLSNTDDIPF.

As to quaternary structure, homotetramer.

It is found in the cellular thylakoid membrane. This is Thylakoid-associated single-stranded DNA-binding protein slr1034 from Synechocystis sp. (strain ATCC 27184 / PCC 6803 / Kazusa).